Here is a 96-residue protein sequence, read N- to C-terminus: Glutamyl-tRNA(Gln) amidotransferase subunit C (96 aa).

Belongs to the GatC family. As to quaternary structure, heterotrimer of A, B and C subunits.

It catalyses the reaction L-glutamyl-tRNA(Gln) + L-glutamine + ATP + H2O = L-glutaminyl-tRNA(Gln) + L-glutamate + ADP + phosphate + H(+). The enzyme catalyses L-aspartyl-tRNA(Asn) + L-glutamine + ATP + H2O = L-asparaginyl-tRNA(Asn) + L-glutamate + ADP + phosphate + 2 H(+). Functionally, allows the formation of correctly charged Asn-tRNA(Asn) or Gln-tRNA(Gln) through the transamidation of misacylated Asp-tRNA(Asn) or Glu-tRNA(Gln) in organisms which lack either or both of asparaginyl-tRNA or glutaminyl-tRNA synthetases. The reaction takes place in the presence of glutamine and ATP through an activated phospho-Asp-tRNA(Asn) or phospho-Glu-tRNA(Gln). In Deinococcus radiodurans (strain ATCC 13939 / DSM 20539 / JCM 16871 / CCUG 27074 / LMG 4051 / NBRC 15346 / NCIMB 9279 / VKM B-1422 / R1), this protein is Glutamyl-tRNA(Gln) amidotransferase subunit C.